The chain runs to 508 residues: UTP--glucose-1-phosphate uridylyltransferase (508 aa).

Ser-13 carries the post-translational modification Phosphoserine. UTP is bound by residues 113–116 (LNGG), Lys-127, Gln-190, and Gly-222. Position 115–116 (115–116 (GG)) interacts with substrate. Mg(2+) is bound at residue Lys-127. Substrate contacts are provided by residues His-223 and 251 to 253 (NID). UTP-binding residues include Asp-253 and Lys-396. Residue Asp-253 participates in Mg(2+) binding. Lys-396 is a catalytic residue. Residue Thr-426 is modified to Phosphothreonine. A Phosphoserine modification is found at Ser-434. Lys-438 bears the N6-acetyllysine mark. Phosphoserine is present on residues Ser-448 and Ser-461. Residues 457 to 508 (HLTVSGDVTFGKNVSLKGTVIIIANHGDRIDIPPGAVLENKIVSGNLRILDH) form an oligomerization region. Positions 502 to 503 (NL) are critical for end-to-end subunit interaction.

Belongs to the UDPGP type 1 family. As to quaternary structure, homooctamer.

It localises to the cytoplasm. It catalyses the reaction alpha-D-glucose 1-phosphate + UTP + H(+) = UDP-alpha-D-glucose + diphosphate. It functions in the pathway glycan biosynthesis; glycogen biosynthesis. UTP--glucose-1-phosphate uridylyltransferase catalyzing the conversion of glucose-1-phosphate into UDP-glucose, a crucial precursor for the production of glycogen. This is UTP--glucose-1-phosphate uridylyltransferase (UGP2) from Cricetulus griseus (Chinese hamster).